We begin with the raw amino-acid sequence, 260 residues long: Potassium inward rectifier (Kir)-like channel 3 (260 aa).

The tract at residues 1 to 34 (MPMTPSEFKNRLLFGSLPRSSSDPTDLQFTEPNV) is disordered. Residues 1 to 68 (MPMTPSEFKN…EQSVSKSIAR (68 aa)) lie on the Cytoplasmic side of the membrane. Residues 18-31 (PRSSSDPTDLQFTE) show a composition bias toward polar residues. The helical transmembrane segment at 69-89 (QALALLVVYLSLGVLIYWLTL) threads the bilayer. Residues 127 to 146 (DSFCFSVMMVTTVGFGDRAF) constitute an intramembrane region (pore-forming). The helical transmembrane segment at 153–173 (FLAAVWLLVSTLAVARAFLFL) threads the bilayer. Topologically, residues 174–260 (ADARADKRNR…LVDLTTATSV (87 aa)) are cytoplasmic. 2 EF-hand domains span residues 190-225 (LGES…QMEK) and 229-256 (EDFI…DLTT). Ca(2+)-binding residues include Asp203, Asp205, Asp207, Arg209, Glu214, Asp242, Ser246, Arg248, and Asp253.

Belongs to the two pore domain potassium channel (TC 1.A.1.7) family. In terms of assembly, homotetramer. In terms of tissue distribution, expressed in hydathodes and the vascular tissues of roots, stems, leaves and flowers.

The protein resides in the vacuole membrane. Its function is as follows. Probable calcium-activated potassium channel. The polypeptide is Potassium inward rectifier (Kir)-like channel 3 (KCO3) (Arabidopsis thaliana (Mouse-ear cress)).